Here is a 659-residue protein sequence, read N- to C-terminus: Anoctamin-10 (659 aa).

Residues 1–207 are Cytoplasmic-facing; sequence MRVTLSTLDT…DSIRSYFGET (207 aa). The helical transmembrane segment at 208 to 228 threads the bilayer; the sequence is IALYFGFLEYFTFALIPMAII. The Extracellular portion of the chain corresponds to 229 to 240; sequence GLPYYLFVWEDY. Residues 241-261 form a helical membrane-spanning segment; that stretch reads DKYVIFASFNLIWSTVILEVW. Over 262–316 the chain is Cytoplasmic; sequence KRGCANMTYRWGTLVMKRQFEEPRPGFHGVLGINSVTGREEPLYSSYKRQLRIYL. A helical transmembrane segment spans residues 317–337; the sequence is VSLPFVCLCLYFSLYVMMIYF. The Extracellular segment spans residues 338–352; sequence DMEDWALSLHEDSGS. A helical transmembrane segment spans residues 353 to 373; the sequence is EWTSLLLYVPSIVYAVVIEIM. At 374–400 the chain is on the cytoplasmic side; sequence NRLYRYAAEFLTSWENHRLESAYQNHL. Residues 401-421 form a helical membrane-spanning segment; it reads VLKVLVFNFLNCFASLFYIAF. The Extracellular portion of the chain corresponds to 422-500; that stretch reads VLKDMKLLRQ…YLGTFDDYLE (79 aa). A helical membrane pass occupies residues 501–521; sequence LFLQFGYVSLFSCVYPLAAAF. Residues 522 to 553 lie on the Cytoplasmic side of the membrane; that stretch reads AVLNNFTEVNSDALKMCRVFKRPFAEPSASIG. Residues 554-574 traverse the membrane as a helical segment; that stretch reads VWQLAFETMSVISVVTNCALI. Topologically, residues 575–590 are extracellular; that stretch reads GMSPQVNAVFPESKTD. Residues 591–611 traverse the membrane as a helical segment; the sequence is LVLIVVAVEHALLALKFILAF. Residues 612 to 659 lie on the Cytoplasmic side of the membrane; sequence AIPDKPRHIQQKLARLEFESLEALKQQQMKLVAENLKEEYQEDGKEAT.

The protein belongs to the anoctamin family. In terms of tissue distribution, predominant expression seen in epithelial tissues.

Its subcellular location is the cell membrane. Its function is as follows. Does not exhibit calcium-activated chloride channel (CaCC) activity. Can inhibit the activity of ANO1. The sequence is that of Anoctamin-10 (Ano10) from Mus musculus (Mouse).